A 142-amino-acid polypeptide reads, in one-letter code: Large ribosomal subunit protein uL11 (142 aa).

It belongs to the universal ribosomal protein uL11 family. Part of the ribosomal stalk of the 50S ribosomal subunit. Interacts with L10 and the large rRNA to form the base of the stalk. L10 forms an elongated spine to which L12 dimers bind in a sequential fashion forming a multimeric L10(L12)X complex. Post-translationally, one or more lysine residues are methylated.

Its function is as follows. Forms part of the ribosomal stalk which helps the ribosome interact with GTP-bound translation factors. The protein is Large ribosomal subunit protein uL11 of Mycolicibacterium gilvum (strain PYR-GCK) (Mycobacterium gilvum (strain PYR-GCK)).